The chain runs to 350 residues: Tetraacyldisaccharide 4'-kinase (350 aa).

48–55 serves as a coordination point for ATP; it reads SAGGTGKT.

This sequence belongs to the LpxK family.

It catalyses the reaction a lipid A disaccharide + ATP = a lipid IVA + ADP + H(+). It participates in glycolipid biosynthesis; lipid IV(A) biosynthesis; lipid IV(A) from (3R)-3-hydroxytetradecanoyl-[acyl-carrier-protein] and UDP-N-acetyl-alpha-D-glucosamine: step 6/6. Transfers the gamma-phosphate of ATP to the 4'-position of a tetraacyldisaccharide 1-phosphate intermediate (termed DS-1-P) to form tetraacyldisaccharide 1,4'-bis-phosphate (lipid IVA). The sequence is that of Tetraacyldisaccharide 4'-kinase from Chlorobium limicola (strain DSM 245 / NBRC 103803 / 6330).